The chain runs to 572 residues: Proline--tRNA ligase (572 aa).

This sequence belongs to the class-II aminoacyl-tRNA synthetase family. ProS type 1 subfamily. In terms of assembly, homodimer.

It localises to the cytoplasm. It carries out the reaction tRNA(Pro) + L-proline + ATP = L-prolyl-tRNA(Pro) + AMP + diphosphate. In terms of biological role, catalyzes the attachment of proline to tRNA(Pro) in a two-step reaction: proline is first activated by ATP to form Pro-AMP and then transferred to the acceptor end of tRNA(Pro). As ProRS can inadvertently accommodate and process non-cognate amino acids such as alanine and cysteine, to avoid such errors it has two additional distinct editing activities against alanine. One activity is designated as 'pretransfer' editing and involves the tRNA(Pro)-independent hydrolysis of activated Ala-AMP. The other activity is designated 'posttransfer' editing and involves deacylation of mischarged Ala-tRNA(Pro). The misacylated Cys-tRNA(Pro) is not edited by ProRS. In Buchnera aphidicola subsp. Acyrthosiphon pisum (strain 5A), this protein is Proline--tRNA ligase.